A 159-amino-acid polypeptide reads, in one-letter code: Phosphodiesterase delta-like protein (159 aa).

The protein belongs to the PDE6D/unc-119 family.

The protein is Phosphodiesterase delta-like protein (pdl-1) of Caenorhabditis elegans.